The chain runs to 368 residues: Phospho-N-acetylmuramoyl-pentapeptide-transferase (368 aa).

The next 9 helical transmembrane spans lie at 30–50 (AAAV…IKYL), 72–92 (LPTM…FLWA), 99–119 (VWLI…DDYM), 139–159 (VLLG…SVLL), 170–190 (LTID…TAVS), 201–221 (GLAS…AYLA), 238–258 (GGEI…FLWF), 264–286 (EIIM…ALLI), and 345–365 (KIVI…LMTL).

The protein belongs to the glycosyltransferase 4 family. MraY subfamily. The cofactor is Mg(2+).

It localises to the cell inner membrane. It catalyses the reaction UDP-N-acetyl-alpha-D-muramoyl-L-alanyl-gamma-D-glutamyl-meso-2,6-diaminopimeloyl-D-alanyl-D-alanine + di-trans,octa-cis-undecaprenyl phosphate = di-trans,octa-cis-undecaprenyl diphospho-N-acetyl-alpha-D-muramoyl-L-alanyl-D-glutamyl-meso-2,6-diaminopimeloyl-D-alanyl-D-alanine + UMP. The protein operates within cell wall biogenesis; peptidoglycan biosynthesis. Its function is as follows. Catalyzes the initial step of the lipid cycle reactions in the biosynthesis of the cell wall peptidoglycan: transfers peptidoglycan precursor phospho-MurNAc-pentapeptide from UDP-MurNAc-pentapeptide onto the lipid carrier undecaprenyl phosphate, yielding undecaprenyl-pyrophosphoryl-MurNAc-pentapeptide, known as lipid I. This Chlorobium limicola (strain DSM 245 / NBRC 103803 / 6330) protein is Phospho-N-acetylmuramoyl-pentapeptide-transferase.